A 200-amino-acid polypeptide reads, in one-letter code: Pyridoxal phosphate homeostasis protein (200 aa).

An N6-(pyridoxal phosphate)lysine modification is found at lysine 11.

It belongs to the pyridoxal phosphate-binding protein YggS/PROSC family. As to quaternary structure, monomer.

Its function is as follows. Pyridoxal 5'-phosphate (PLP)-binding protein, which is involved in PLP homeostasis. The chain is Pyridoxal phosphate homeostasis protein from Buchnera aphidicola subsp. Acyrthosiphon pisum (strain APS) (Acyrthosiphon pisum symbiotic bacterium).